A 212-amino-acid polypeptide reads, in one-letter code: Fe/S biogenesis protein NfuA (212 aa).

2 residues coordinate [4Fe-4S] cluster: C169 and C172.

This sequence belongs to the NfuA family. Homodimer. It depends on [4Fe-4S] cluster as a cofactor.

Involved in iron-sulfur cluster biogenesis. Binds a 4Fe-4S cluster, can transfer this cluster to apoproteins, and thereby intervenes in the maturation of Fe/S proteins. Could also act as a scaffold/chaperone for damaged Fe/S proteins. This is Fe/S biogenesis protein NfuA from Acinetobacter baylyi (strain ATCC 33305 / BD413 / ADP1).